The following is a 162-amino-acid chain: Ribonuclease (162 aa).

Positions 1-29 (MKKISSVFTMFALIAAILFSGFIPQQAYA) are cleaved as a signal peptide. The propeptide occupies 30–53 (ETTLTPTATNKTASIQLTSDVHTL). Glutamate 125 functions as the Proton acceptor in the catalytic mechanism. Histidine 154 acts as the Proton donor in catalysis.

Belongs to the ribonuclease N1/T1 family.

Its subcellular location is the secreted. Functionally, this is a purine-specific ribonuclease. This is Ribonuclease from Bacillus pumilus (Bacillus mesentericus).